Here is a 133-residue protein sequence, read N- to C-terminus: ATP synthase epsilon chain, chloroplastic (133 aa).

This sequence belongs to the ATPase epsilon chain family. F-type ATPases have 2 components, CF(1) - the catalytic core - and CF(0) - the membrane proton channel. CF(1) has five subunits: alpha(3), beta(3), gamma(1), delta(1), epsilon(1). CF(0) has three main subunits: a, b and c.

Its subcellular location is the plastid. The protein localises to the chloroplast thylakoid membrane. In terms of biological role, produces ATP from ADP in the presence of a proton gradient across the membrane. In Lactuca sativa (Garden lettuce), this protein is ATP synthase epsilon chain, chloroplastic.